Reading from the N-terminus, the 164-residue chain is Lipoprotein signal peptidase (164 aa).

A run of 4 helical transmembrane segments spans residues 2-22 (MSLL…AIVL), 40-60 (VVIT…AFSF), 70-90 (WLFS…MAKA), and 99-119 (LAYS…VVYG). Residues Asp-123 and Asp-142 contribute to the active site. The chain crosses the membrane as a helical span at residues 138–158 (FNVADMAISCGAVFIILDGFI).

Belongs to the peptidase A8 family.

It is found in the cell inner membrane. The enzyme catalyses Release of signal peptides from bacterial membrane prolipoproteins. Hydrolyzes -Xaa-Yaa-Zaa-|-(S,diacylglyceryl)Cys-, in which Xaa is hydrophobic (preferably Leu), and Yaa (Ala or Ser) and Zaa (Gly or Ala) have small, neutral side chains.. Its pathway is protein modification; lipoprotein biosynthesis (signal peptide cleavage). Its function is as follows. This protein specifically catalyzes the removal of signal peptides from prolipoproteins. This is Lipoprotein signal peptidase from Tolumonas auensis (strain DSM 9187 / NBRC 110442 / TA 4).